Here is a 311-residue protein sequence, read N- to C-terminus: Protein N-terminal asparagine amidohydrolase (311 aa).

In terms of assembly, monomer.

It is found in the cytoplasm. It catalyses the reaction N-terminal L-asparaginyl-[protein] + H2O + H(+) = N-terminal L-aspartyl-[protein] + NH4(+). In terms of biological role, N-terminal asparagine deamidase that mediates deamidation of N-terminal asparagine residues to aspartate. Required for the ubiquitin-dependent turnover of intracellular proteins that initiate with Met-Asn. These proteins are acetylated on the retained initiator methionine and can subsequently be modified by the removal of N-acetyl methionine by acylaminoacid hydrolase (AAH). Conversion of the resulting N-terminal asparagine to aspartate by NTAN1/PNAD renders the protein susceptible to arginylation, polyubiquitination and degradation as specified by the N-end rule. This enzyme does not act on substrates with internal or C-terminal asparagines and does not act on glutamine residues in any position. This is Protein N-terminal asparagine amidohydrolase (NTAN1) from Sus scrofa (Pig).